The chain runs to 292 residues: Type II methyltransferase M.SmaI (292 aa).

A disordered region spans residues 110-130 (WRDKDDKNKGRAMSYRPPTPE).

The protein belongs to the N(4)/N(6)-methyltransferase family. N(4) subfamily.

It catalyses the reaction a 2'-deoxycytidine in DNA + S-adenosyl-L-methionine = an N(4)-methyl-2'-deoxycytidine in DNA + S-adenosyl-L-homocysteine + H(+). In terms of biological role, a beta subtype methylase thatnrecognizes the double-stranded sequence 5'-CCCGGG-3', methylates C-2 on both strands, and protects the DNA from cleavage by the SmaI endonuclease. The polypeptide is Type II methyltransferase M.SmaI (smaIM) (Serratia marcescens).